Here is a 206-residue protein sequence, read N- to C-terminus: Emopamil-binding protein-like (206 aa).

The next 4 helical transmembrane spans lie at 10–30 (EAGS…ALGL), 42–62 (WVLA…GAFV), 101–121 (LEIL…YAIV), and 165–185 (LWVY…LLLW). One can recognise an EXPERA domain in the interval 39 to 184 (VERWVLAWLC…LWVLIPGLLL (146 aa)).

The protein belongs to the EBP family. As to quaternary structure, homodimer.

It is found in the endoplasmic reticulum membrane. In terms of biological role, does not possess sterol isomerase activity and does not bind sigma ligands. This chain is Emopamil-binding protein-like (Ebpl), found in Mus musculus (Mouse).